A 126-amino-acid polypeptide reads, in one-letter code: Histone H2B type 1-K (126 aa).

Positions 1–12 are enriched in low complexity; the sequence is MPEPAKSAPAPK. The segment at 1-36 is disordered; that stretch reads MPEPAKSAPAPKKGSKKAVTKAQKKDGKKRKRSRKE. The residue at position 2 (P2) is an N-acetylproline. Residue E3 is modified to ADP-ribosyl glutamic acid. An N6-(2-hydroxyisobutyryl)lysine; alternate modification is found at K6. K6 carries the N6-(beta-hydroxybutyryl)lysine; alternate modification. An N6-acetyllysine; alternate modification is found at K6. K6 bears the N6-butyryllysine; alternate mark. The residue at position 6 (K6) is an N6-crotonyllysine; alternate. K6 carries the post-translational modification N6-lactoyllysine; alternate. A Glycyl lysine isopeptide (Lys-Gly) (interchain with G-Cter in SUMO2); alternate cross-link involves residue K6. Position 7 is an ADP-ribosylserine (S7). Residue K12 is modified to N6-(beta-hydroxybutyryl)lysine; alternate. K12 and K13 each carry N6-acetyllysine; alternate. N6-crotonyllysine; alternate is present on residues K12 and K13. Residue K12 is modified to N6-lactoyllysine; alternate. The residue at position 13 (K13) is an N6-(2-hydroxyisobutyryl)lysine; alternate. At S15 the chain carries Phosphoserine; by STK4/MST1. N6-acetyllysine; alternate occurs at positions 16, 17, 21, and 24. Residues K16, K17, K21, and K24 each carry the N6-crotonyllysine; alternate modification. K16, K17, K21, and K24 each carry N6-lactoyllysine; alternate. An N6-glutaryllysine; alternate modification is found at K17. N6-(2-hydroxyisobutyryl)lysine; alternate is present on residues K21 and K24. The residue at position 21 (K21) is an N6-(beta-hydroxybutyryl)lysine; alternate. K21 is subject to N6-butyryllysine; alternate. K21 is covalently cross-linked (Glycyl lysine isopeptide (Lys-Gly) (interchain with G-Cter in SUMO2); alternate). Residue K25 is modified to N6-(2-hydroxyisobutyryl)lysine. Position 35 is an N6-(2-hydroxyisobutyryl)lysine; alternate (K35). K35 is modified (N6-(beta-hydroxybutyryl)lysine; alternate). The residue at position 35 (K35) is an N6-crotonyllysine; alternate. Residue K35 is modified to N6-glutaryllysine; alternate. K35 carries the N6-succinyllysine; alternate modification. K35 participates in a covalent cross-link: Glycyl lysine isopeptide (Lys-Gly) (interchain with G-Cter in ubiquitin); alternate. A PolyADP-ribosyl glutamic acid modification is found at E36. S37 bears the Phosphoserine; by AMPK mark. N6-(2-hydroxyisobutyryl)lysine; alternate is present on residues K44, K47, and K58. Position 44 is an N6-lactoyllysine; alternate (K44). An N6-glutaryllysine; alternate mark is found at K44 and K47. K47 carries the post-translational modification N6-methyllysine; alternate. Residue K58 is modified to N6,N6-dimethyllysine; alternate. R80 bears the Dimethylated arginine mark. K86 carries the post-translational modification N6-(2-hydroxyisobutyryl)lysine; alternate. At K86 the chain carries N6-acetyllysine; alternate. K86 is subject to N6-lactoyllysine; alternate. K86 bears the N6,N6,N6-trimethyllysine; alternate mark. R87 and R93 each carry omega-N-methylarginine. An N6-(2-hydroxyisobutyryl)lysine; alternate modification is found at K109. K109 carries the post-translational modification N6-(beta-hydroxybutyryl)lysine; alternate. K109 is modified (N6-lactoyllysine; alternate). K109 is modified (N6-glutaryllysine; alternate). An N6-methyllysine; alternate modification is found at K109. S113 carries an O-linked (GlcNAc) serine glycan. T116 carries the phosphothreonine modification. 2 positions are modified to N6-(2-hydroxyisobutyryl)lysine; alternate: K117 and K121. K117 carries the N6-(beta-hydroxybutyryl)lysine; alternate modification. K117 and K121 each carry N6-lactoyllysine; alternate. N6-glutaryllysine; alternate is present on residues K117 and K121. K117 and K121 each carry N6-succinyllysine; alternate. K117 bears the N6-methylated lysine; alternate mark. Residue K121 forms a Glycyl lysine isopeptide (Lys-Gly) (interchain with G-Cter in ubiquitin); alternate linkage.

The protein belongs to the histone H2B family. As to quaternary structure, the nucleosome is a histone octamer containing two molecules each of H2A, H2B, H3 and H4 assembled in one H3-H4 heterotetramer and two H2A-H2B heterodimers. The octamer wraps approximately 147 bp of DNA. In terms of processing, monoubiquitination at Lys-35 (H2BK34Ub) by the MSL1/MSL2 dimer is required for histone H3 'Lys-4' (H3K4me) and 'Lys-79' (H3K79me) methylation and transcription activation at specific gene loci, such as HOXA9 and MEIS1 loci. Similarly, monoubiquitination at Lys-121 (H2BK120Ub) by the RNF20/40 complex gives a specific tag for epigenetic transcriptional activation and is also prerequisite for histone H3 'Lys-4' and 'Lys-79' methylation. It also functions cooperatively with the FACT dimer to stimulate elongation by RNA polymerase II. H2BK120Ub also acts as a regulator of mRNA splicing: deubiquitination by USP49 is required for efficient cotranscriptional splicing of a large set of exons. Phosphorylated on Ser-15 (H2BS14ph) by STK4/MST1 during apoptosis; which facilitates apoptotic chromatin condensation. Also phosphorylated on Ser-15 in response to DNA double strand breaks (DSBs), and in correlation with somatic hypermutation and immunoglobulin class-switch recombination. Phosphorylation at Ser-37 (H2BS36ph) by AMPK in response to stress promotes transcription. Post-translationally, glcNAcylation at Ser-113 promotes monoubiquitination of Lys-121. It fluctuates in response to extracellular glucose, and associates with transcribed genes. In terms of processing, ADP-ribosylated by PARP1 or PARP2 on Ser-7 (H2BS6ADPr) in response to DNA damage. H2BS6ADPr promotes recruitment of CHD1L. Mono-ADP-ribosylated on Glu-3 (H2BE2ADPr) by PARP3 in response to single-strand breaks. Poly ADP-ribosylation on Glu-36 (H2BE35ADPr) by PARP1 regulates adipogenesis: it inhibits phosphorylation at Ser-37 (H2BS36ph), thereby blocking expression of pro-adipogenetic genes. Crotonylation (Kcr) is specifically present in male germ cells and marks testis-specific genes in post-meiotic cells, including X-linked genes that escape sex chromosome inactivation in haploid cells. Crotonylation marks active promoters and enhancers and confers resistance to transcriptional repressors. It is also associated with post-meiotically activated genes on autosomes. Post-translationally, hydroxybutyrylation of histones is induced by starvation. In terms of processing, lactylated in macrophages by EP300/P300 by using lactoyl-CoA directly derived from endogenous or exogenous lactate, leading to stimulates gene transcription.

The protein localises to the nucleus. The protein resides in the chromosome. Core component of nucleosome. Nucleosomes wrap and compact DNA into chromatin, limiting DNA accessibility to the cellular machineries which require DNA as a template. Histones thereby play a central role in transcription regulation, DNA repair, DNA replication and chromosomal stability. DNA accessibility is regulated via a complex set of post-translational modifications of histones, also called histone code, and nucleosome remodeling. The sequence is that of Histone H2B type 1-K from Mus musculus (Mouse).